A 127-amino-acid polypeptide reads, in one-letter code: Aspartate 1-decarboxylase (127 aa).

Residue S25 is the Schiff-base intermediate with substrate; via pyruvic acid of the active site. S25 bears the Pyruvic acid (Ser) mark. T57 is a binding site for substrate. Y58 acts as the Proton donor in catalysis. 73 to 75 (GAA) contributes to the substrate binding site.

It belongs to the PanD family. Heterooctamer of four alpha and four beta subunits. It depends on pyruvate as a cofactor. Is synthesized initially as an inactive proenzyme, which is activated by self-cleavage at a specific serine bond to produce a beta-subunit with a hydroxyl group at its C-terminus and an alpha-subunit with a pyruvoyl group at its N-terminus.

The protein resides in the cytoplasm. It catalyses the reaction L-aspartate + H(+) = beta-alanine + CO2. It functions in the pathway cofactor biosynthesis; (R)-pantothenate biosynthesis; beta-alanine from L-aspartate: step 1/1. Functionally, catalyzes the pyruvoyl-dependent decarboxylation of aspartate to produce beta-alanine. The polypeptide is Aspartate 1-decarboxylase (Aliarcobacter butzleri (strain RM4018) (Arcobacter butzleri)).